Reading from the N-terminus, the 422-residue chain is SH2 domain-containing protein 4A (422 aa).

A phosphoserine mark is found at S117 and S123. Disordered regions lie at residues 141–190 (PQNV…EDEK) and 202–282 (SEWQ…VIRT). Composition is skewed to basic and acidic residues over residues 163-190 (TKKDDKAQTKDLTKKKDSEELKQTEDEK) and 212-231 (KAADEKRRSLAKQAREDYKR). Phosphoserine is present on S233. The SH2 domain maps to 316–408 (WFHGILTLKK…LGKELLLFPC (93 aa)).

As to quaternary structure, interacts with ESR1.

It is found in the cytoplasm. Its function is as follows. Inhibits estrogen-induced cell proliferation by competing with PLCG for binding to ESR1, blocking the effect of estrogen on PLCG and repressing estrogen-induced proliferation. May play a role in T-cell development and function. The polypeptide is SH2 domain-containing protein 4A (Sh2d4a) (Rattus norvegicus (Rat)).